Consider the following 328-residue polypeptide: MAAAAAAAAAATNGTGGSSGMEVDAAVVPSVMASGVTGSVSVALHPLVILNISDHWIRMRSQEGRPVQVIGALIGKQEGRNIEVMNSFELLSHTVEEKIIIDKEYYYTKEEQFKQVFKELEFLGWYTTGGPPDPSDIHVHKQVCEIIESPLFLKLNPMTKHTDLPVSVFESVIDIINGEATMLFAELTYTLATEEAERIGVDHVARMTATGSGENSTVAEHLIAQHSAIKMLHSRVKLILEYVKASEAGEVPFNHEILREAYALCHCLPVLSTDKFKTDFYDQCNDVGLMAYLGTITKTCNTMNQFVNKFNVLYDRQGIGRRMRGLFF.

The 134-residue stretch at 42–175 (VALHPLVILN…VSVFESVIDI (134 aa)) folds into the MPN domain.

Belongs to the peptidase M67A family. CSN6 subfamily. As to quaternary structure, component of the CSN complex, composed of COPS1/GPS1, COPS2, COPS3, COPS4, COPS5, COPS6, COPS7 (COPS7A or COPS7B), COPS8 and COPS9. In the complex, it probably interacts directly with COPS2, COPS4, COPS5, COPS7 (COPS7A or COPS7B) and COPS9. Interacts with the translation initiation factor EIF3S6. Interacts weakly with RBX1. Directly interacts with COP1 and 14-3-3 protein sigma/SFN. Interacts with ERCC6.

The protein localises to the cytoplasm. It localises to the nucleus. In terms of biological role, component of the COP9 signalosome complex (CSN), a complex involved in various cellular and developmental processes. The CSN complex is an essential regulator of the ubiquitin (Ubl) conjugation pathway by mediating the deneddylation of the cullin subunits of SCF-type E3 ligase complexes, leading to decrease the Ubl ligase activity of SCF-type complexes such as SCF, CSA or DDB2. The complex is also involved in phosphorylation of p53/TP53, c-jun/JUN, IkappaBalpha/NFKBIA, ITPK1 and IRF8, possibly via its association with CK2 and PKD kinases. CSN-dependent phosphorylation of TP53 and JUN promotes and protects degradation by the Ubl system, respectively. Has some glucocorticoid receptor-responsive activity. Stabilizes COP1 through reducing COP1 auto-ubiquitination and decelerating COP1 turnover rate, hence regulates the ubiquitination of COP1 targets, including SFN. The sequence is that of COP9 signalosome complex subunit 6 (COPS6) from Pongo abelii (Sumatran orangutan).